Here is a 113-residue protein sequence, read N- to C-terminus: RING-box protein 2 (113 aa).

The tract at residues 1–26 is disordered; it reads MADVEDGEETCALASHSGSSGSKSGG. The residue at position 2 (A2) is an N-acetylalanine. At T10 the chain carries Phosphothreonine; by CK2. C50, C53, C61, C64, C73, C80, H82, H85, C87, C88, C99, and C102 together coordinate Zn(2+). The segment at 61–103 adopts an RING-type zinc-finger fold; that stretch reads CLRCQAENKQEDCVVVWGECNHSFHNCCMSLWVKQNNRCPLCQ.

Belongs to the RING-box family. As to quaternary structure, catalytic component of multiple cullin-5-RING E3 ubiquitin-protein ligase complexes (ECS complexes, also named CRL5 complexes) composed of CUL5, Elongin BC (ELOB and ELOC), RNF7/RBX2 and a variable SOCS box domain-containing protein as substrate-specific recognition component. Also interacts (with lower preference) with CUL1, CUL2, CUL3, CUL4A and CUL4B; additional evidence is however required to confirm this result in vivo. Interacts with UBE2F. Interacts with CSNK2B, the interaction is not affected by phosphorylation by CK2. May also interact with DCUN1D1, DCUN1D2, DCUN1D3, DCUN1D4 and DCUN1D5. In terms of assembly, (Microbial infection) Following infection by HIV-1 virus, component of a cullin-5-RING E3 ubiquitin-protein ligase complex (ECS complex) hijacked by the HIV-1 Vif protein. Post-translationally, phosphorylation at Thr-10 by CK2 promotes its degradation by the proteasome. As to expression, expressed in heart, liver, skeletal muscle and pancreas. At very low levels expressed in brain, placenta and lung.

Its subcellular location is the cytoplasm. The protein localises to the nucleus. The catalysed reaction is S-ubiquitinyl-[E2 ubiquitin-conjugating enzyme]-L-cysteine + [acceptor protein]-L-lysine = [E2 ubiquitin-conjugating enzyme]-L-cysteine + N(6)-ubiquitinyl-[acceptor protein]-L-lysine.. It catalyses the reaction S-[NEDD8-protein]-yl-[E2 NEDD8-conjugating enzyme]-L-cysteine + [cullin]-L-lysine = [E2 NEDD8-conjugating enzyme]-L-cysteine + N(6)-[NEDD8-protein]-yl-[cullin]-L-lysine.. Its pathway is protein modification; protein ubiquitination. The protein operates within protein modification; protein neddylation. Functionally, catalytic component of multiple cullin-5-RING E3 ubiquitin-protein ligase complexes (ECS complexes), which mediate the ubiquitination and subsequent proteasomal degradation of target proteins. It is thereby involved in various biological processes, such as cell cycle progression, signal transduction and transcription. The functional specificity of the E3 ubiquitin-protein ligase ECS complexes depend on the variable SOCS box-containing substrate recognition component. Within ECS complexes, RNF7/RBX2 recruits the E2 ubiquitination enzyme to the complex via its RING-type and brings it into close proximity to the substrate. Catalytic subunit of various SOCS-containing ECS complexes, such as the ECS(SOCS7) complex, that regulate reelin signaling by mediating ubiquitination and degradation of DAB1. The ECS(SOCS2) complex mediates the ubiquitination and subsequent proteasomal degradation of phosphorylated EPOR and GHR. Promotes ubiquitination and degradation of NF1, thereby regulating Ras protein signal transduction. As part of the ECS(ASB9) complex, catalyzes ubiquitination and degradation of CKB. The ECS(SPSB3) complex catalyzes ubiquitination of nuclear CGAS. As part of the ECS(RAB40C) complex, mediates ANKRD28 ubiquitination and degradation, thereby inhibiting protein phosphatase 6 (PP6) complex activity and focal adhesion assembly during cell migration. As part of some ECS complex, catalyzes 'Lys-11'-linked ubiquitination and degradation of BTRC. ECS complexes and ARIH2 collaborate in tandem to mediate ubiquitination of target proteins; ARIH2 mediating addition of the first ubiquitin on CRLs targets. Specifically catalyzes the neddylation of CUL5 via its interaction with UBE2F. Does not catalyze neddylation of other cullins (CUL1, CUL2, CUL3, CUL4A or CUL4B). May play a role in protecting cells from apoptosis induced by redox agents. Inactive. In terms of biological role, (Microbial infection) Following infection by HIV-1 virus, catalytic component of a cullin-5-RING E3 ubiquitin-protein ligase complex (ECS complex) hijacked by the HIV-1 Vif protein, which catalyzes ubiquitination and degradation of APOBEC3F and APOBEC3G. This Homo sapiens (Human) protein is RING-box protein 2.